Consider the following 2185-residue polypeptide: Genome polyprotein (2185 aa).

Glycine 2 is lipidated: N-myristoyl glycine; by host. The Cytoplasmic segment spans residues 2 to 1495 (GAQVSTQKTG…HVSRAFICLQ (1494 aa)). Positions 568–584 (FFQGPVEDAITAAIGRV) are amphipathic alpha-helix. Residues histidine 872 and aspartate 890 each act as for protease 2A activity in the active site. Residues cysteine 907 and cysteine 909 each contribute to the Zn(2+) site. The active-site For protease 2A activity is cysteine 961. Residues cysteine 967 and histidine 969 each coordinate Zn(2+). Residues 1101–1173 (NNGWLKKFTE…EQSAPSQSDQ (73 aa)) are membrane-binding. The segment at 1101–1239 (NNGWLKKFTE…SPGAGKSVAT (139 aa)) is oligomerization. An RNA-binding region spans residues 1122-1126 (AIKIQ). Residues 1205–1361 (EKKMSNYIQF…SMYSQNGKIN (157 aa)) form the SF3 helicase domain. Residues cysteine 1369, cysteine 1381, and cysteine 1386 each contribute to the Zn(2+) site. The C4-type; degenerate zinc-finger motif lies at 1369–1386 (CDEECCPVNFKKCCPLVC). Residues 1413–1420 (EYNHRHSV) are RNA-binding. The oligomerization stretch occupies residues 1424-1429 (LEALFQ). Residues 1496-1511 (AITTFVSVAGIIYIIY) lie within the membrane without spanning it. Residues 1512–2185 (KLFAGFQGAY…TIRRKWLDSF (674 aa)) lie on the Cytoplasmic side of the membrane. Tyrosine 1521 carries the O-(5'-phospho-RNA)-tyrosine modification. The region spanning 1541 to 1719 (GPAFEFAVAM…FSAALLKHYF (179 aa)) is the Peptidase C3 domain. Residues histidine 1580, glutamate 1611, and cysteine 1687 each act as for protease 3C activity in the active site. In terms of domain architecture, RdRp catalytic spans 1950–2066 (GHLIAFDYSG…SYPWPIDASL (117 aa)). Residues aspartate 1956 and aspartate 2052 each contribute to the Mg(2+) site.

This sequence belongs to the picornaviruses polyprotein family. As to quaternary structure, interacts with capsid protein VP1 and capsid protein VP3 to form heterotrimeric protomers. In terms of assembly, interacts with capsid protein VP0, and capsid protein VP3 to form heterotrimeric protomers. Five protomers subsequently associate to form pentamers which serve as building blocks for the capsid. Interacts with capsid protein VP2, capsid protein VP3 and capsid protein VP4 following cleavage of capsid protein VP0. Interacts with host CD55. Interacts with host CXADR. Interacts with capsid protein VP1 and capsid protein VP3 in the mature capsid. As to quaternary structure, interacts with capsid protein VP0 and capsid protein VP1 to form heterotrimeric protomers. Five protomers subsequently associate to form pentamers which serve as building blocks for the capsid. Interacts with capsid protein VP4 in the mature capsid. Interacts with protein 2C; this interaction may be important for virion morphogenesis. In terms of assembly, interacts with capsid protein VP1 and capsid protein VP3. Homodimer. As to quaternary structure, homohexamer; forms a hexameric ring structure with 6-fold symmetry characteristic of AAA+ ATPases. Interacts (via N-terminus) with host RTN3 (via reticulon domain); this interaction is important for viral replication. Interacts with capsid protein VP3; this interaction may be important for virion morphogenesis. In terms of assembly, interacts with protein 3CD. Homodimer. Interacts with host GBF1. Interacts (via GOLD domain) with host ACBD3 (via GOLD domain); this interaction allows the formation of a viral protein 3A/ACBD3 heterotetramer with a 2:2 stoichiometry, which will stimulate the recruitment of host PI4KB in order to synthesize PI4P at the viral RNA replication sites. As to quaternary structure, interacts with RNA-directed RNA polymerase. In terms of assembly, interacts with host TICAM1 (via C-terminus). Interacts with protein 3AB and with RNA-directed RNA polymerase. As to quaternary structure, interacts with Viral protein genome-linked and with protein 3CD. The cofactor is Mg(2+). Specific enzymatic cleavages in vivo by the viral proteases yield processing intermediates and the mature proteins. In terms of processing, myristoylation is required for the formation of pentamers during virus assembly. Further assembly of 12 pentamers and a molecule of genomic RNA generates the provirion. Post-translationally, during virion maturation, immature virions are rendered infectious following cleavage of VP0 into VP4 and VP2. This maturation seems to be an autocatalytic event triggered by the presence of RNA in the capsid and it is followed by a conformational change infectious virion. Myristoylation is required during RNA encapsidation and formation of the mature virus particle. In terms of processing, VPg is uridylylated by the polymerase into VPg-pUpU. This acts as a nucleotide-peptide primer for the genomic RNA replication.

The protein localises to the virion. It is found in the host cytoplasm. The protein resides in the host cytoplasmic vesicle membrane. It localises to the host nucleus. It catalyses the reaction a ribonucleoside 5'-triphosphate + H2O = a ribonucleoside 5'-diphosphate + phosphate + H(+). The enzyme catalyses Selective cleavage of Tyr-|-Gly bond in the picornavirus polyprotein.. The catalysed reaction is RNA(n) + a ribonucleoside 5'-triphosphate = RNA(n+1) + diphosphate. It carries out the reaction Selective cleavage of Gln-|-Gly bond in the poliovirus polyprotein. In other picornavirus reactions Glu may be substituted for Gln, and Ser or Thr for Gly.. With respect to regulation, replication or transcription is subject to high level of random mutations by the nucleotide analog ribavirin. Its function is as follows. Forms an icosahedral capsid of pseudo T=3 symmetry with capsid proteins VP2 and VP3. The capsid is 300 Angstroms in diameter, composed of 60 copies of each capsid protein and enclosing the viral positive strand RNA genome. Capsid protein VP1 mainly forms the vertices of the capsid. Capsid protein VP1 interacts with host cell receptors CD55 and CXADR to provide virion attachment to target host cells. This attachment induces virion internalization. Tyrosine kinases are probably involved in the entry process. After binding to its receptor, the capsid undergoes conformational changes. Capsid protein VP1 N-terminus (that contains an amphipathic alpha-helix) and capsid protein VP4 are externalized. Together, they shape a pore in the host membrane through which viral genome is translocated to host cell cytoplasm. Functionally, forms an icosahedral capsid of pseudo T=3 symmetry with capsid proteins VP2 and VP3. The capsid is 300 Angstroms in diameter, composed of 60 copies of each capsid protein and enclosing the viral positive strand RNA genome. Lies on the inner surface of the capsid shell. After binding to the host receptor, the capsid undergoes conformational changes. Capsid protein VP4 is released, Capsid protein VP1 N-terminus is externalized, and together, they shape a pore in the host membrane through which the viral genome is translocated into the host cell cytoplasm. In terms of biological role, component of immature procapsids, which is cleaved into capsid proteins VP4 and VP2 after maturation. Allows the capsid to remain inactive before the maturation step. Its function is as follows. Cysteine protease that cleaves viral polyprotein and specific host proteins. It is responsible for the autocatalytic cleavage between the P1 and P2 regions, which is the first cleavage occurring in the polyprotein. Also cleaves the host translation initiation factor EIF4G1, in order to shut down the capped cellular mRNA translation. Inhibits the host nucleus-cytoplasm protein and RNA trafficking by cleaving host members of the nuclear pores. Counteracts stress granule formation probably by antagonizing its assembly or promoting its dissassembly. Cleaves and inhibits host IFIH1/MDA5, thereby inhibiting the type-I IFN production and the establishment of the antiviral state. Cleaves and inhibits host MAVS, thereby inhibiting the type-I IFN production and the establishment of the antiviral state. Functionally, plays an essential role in the virus replication cycle by acting as a viroporin. Creates a pore in the host endoplasmic reticulum and as a consequence releases Ca2+ in the cytoplasm of infected cell. In turn, high levels of cytoplasmic calcium may trigger membrane trafficking and transport of viral ER-associated proteins to viroplasms, sites of viral genome replication. Induces and associates with structural rearrangements of intracellular membranes. Displays RNA-binding, nucleotide binding and NTPase activities. May play a role in virion morphogenesis and viral RNA encapsidation by interacting with the capsid protein VP3. In terms of biological role, localizes the viral replication complex to the surface of membranous vesicles. Together with protein 3CD binds the Cis-Active RNA Element (CRE) which is involved in RNA synthesis initiation. Acts as a cofactor to stimulate the activity of 3D polymerase, maybe through a nucleid acid chaperone activity. Its function is as follows. Localizes the viral replication complex to the surface of membranous vesicles. It inhibits host cell endoplasmic reticulum-to-Golgi apparatus transport and causes the disassembly of the Golgi complex, possibly through GBF1 interaction. This would result in depletion of MHC, trail receptors and IFN receptors at the host cell surface. Plays an essential role in viral RNA replication by recruiting ACBD3 and PI4KB at the viral replication sites, thereby allowing the formation of the rearranged membranous structures where viral replication takes place. Functionally, acts as a primer for viral RNA replication and remains covalently bound to viral genomic RNA. VPg is uridylylated prior to priming replication into VPg-pUpU. The oriI viral genomic sequence may act as a template for this. The VPg-pUpU is then used as primer on the genomic RNA poly(A) by the RNA-dependent RNA polymerase to replicate the viral genome. During genome replication, the VPg-RNA linkage is removed by the host TDP2, thereby accelerating replication. During the late stage of the replication cycle, host TDP2 is excluded from sites of viral RNA synthesis and encapsidation, allowing for the generation of progeny virions. Involved in the viral replication complex and viral polypeptide maturation. It exhibits protease activity with a specificity and catalytic efficiency that is different from protease 3C. Protein 3CD lacks polymerase activity. Protein 3CD binds to the 5'UTR of the viral genome. In terms of biological role, major viral protease that mediates proteolytic processing of the polyprotein. Cleaves host EIF5B, contributing to host translation shutoff. Also cleaves host PABPC1, contributing to host translation shutoff. Cleaves and inhibits host RIGI, thereby inhibiting the type-I IFN production and the establishment of the antiviral state. Cleaves and inhibits host MAVS, thereby inhibiting the type-I IFN production and the establishment of the antiviral state. Cleaves and inhibits host TICAM1/TRIF, thereby inhibiting the type-I IFN production. Cleaves host NLRP1, triggers host N-glycine-mediated degradation of the autoinhibitory NLRP1 N-terminal fragment. Its function is as follows. Replicates the viral genomic RNA on the surface of intracellular membranes. May form linear arrays of subunits that propagate along a strong head-to-tail interaction called interface-I. Covalently attaches UMP to a tyrosine of VPg, which is used to prime RNA synthesis. The positive stranded RNA genome is first replicated at virus induced membranous vesicles, creating a dsRNA genomic replication form. This dsRNA is then used as template to synthesize positive stranded RNA genomes. ss(+)RNA genomes are either translated, replicated or encapsidated. The sequence is that of Genome polyprotein from Homo sapiens (Human).